A 375-amino-acid polypeptide reads, in one-letter code: DNA replication and repair protein RecF (375 aa).

30-37 (GENAQGKT) is an ATP binding site.

It belongs to the RecF family.

It localises to the cytoplasm. Functionally, the RecF protein is involved in DNA metabolism; it is required for DNA replication and normal SOS inducibility. RecF binds preferentially to single-stranded, linear DNA. It also seems to bind ATP. This chain is DNA replication and repair protein RecF, found in Bacillus cereus (strain B4264).